The chain runs to 996 residues: Sodium/potassium-transporting ATPase subunit alpha-A (996 aa).

Transmembrane regions (helical) follow at residues 73–93 (LFGG…IAYT) and 107–123 (LYLG…TGCF). The tract at residues 191–211 (DNSSLTGESEPQSRSTECTND) is disordered. The next 2 membrane-spanning stretches (helical) occupy residues 268–290 (FIHI…SFLY) and 297–325 (AAIF…TLTA). D353 acts as the 4-aspartylphosphate intermediate in catalysis. K483 lines the ATP pocket. 2 residues coordinate Mg(2+): D692 and D696. 4 helical membrane-spanning segments follow: residues 762-785 (LSPF…ILCI), 820-847 (ERLI…VIMG), 889-909 (YTCH…DLII), and 926-951 (TLNF…DKGL).

Belongs to the cation transport ATPase (P-type) (TC 3.A.3) family. Type IIC subfamily. In terms of assembly, the sodium/potassium-transporting ATPase is composed of a catalytic alpha subunit, an auxiliary non-catalytic beta subunit and an additional regulatory subunit.

The protein localises to the cell membrane. It catalyses the reaction K(+)(out) + Na(+)(in) + ATP + H2O = K(+)(in) + Na(+)(out) + ADP + phosphate + H(+). In terms of biological role, this is the catalytic component of the active enzyme, which catalyzes the hydrolysis of ATP coupled with the exchange of sodium and potassium ions across the plasma membrane. This action creates the electrochemical gradient of sodium and potassium ions, providing the energy for active transport of various nutrients. This is Sodium/potassium-transporting ATPase subunit alpha-A from Artemia franciscana (Brine shrimp).